The primary structure comprises 764 residues: Polyadenylate-binding protein, cytoplasmic and nuclear (764 aa).

Residues 36–56 (VPEAQAEGAEAAPTPTAAPHP) form a disordered region. 4 RRM domains span residues 60 to 138 (ASLY…WSQR), 148 to 225 (GNIF…HHIP), 241 to 318 (TNVY…RAQK), and 344 to 462 (VNLY…LAQR). 2 disordered regions span residues 375-420 (VMRD…GDRK) and 587-634 (GRGG…PRGN). Basic and acidic residues-rich tracts occupy residues 387-399 (KDEK…KEGE) and 408-420 (GSEK…GDRK). Residues 587-596 (GRGGPAGRGP) are compositionally biased toward gly residues. Low complexity predominate over residues 597 to 613 (QGIPAGIPQGLQGGPAV). Residues 657-734 (GSFLQAQLAT…ALAVYDEYLK (78 aa)) form the PABC domain. A compositionally biased stretch (polar residues) spans 735–745 (TQGQQPTQQPA). The tract at residues 735 to 764 (TQGQQPTQQPAEANGEQPKAEEQKPEEQKA) is disordered. The segment covering 752–764 (PKAEEQKPEEQKA) has biased composition (basic and acidic residues).

Belongs to the polyadenylate-binding protein type-1 family.

Its subcellular location is the cytoplasm. It localises to the nucleus. In terms of biological role, binds the poly(A) tail of mRNA. Appears to be an important mediator of the multiple roles of the poly(A) tail in mRNA biogenesis, stability and translation. In the nucleus, involved in both mRNA cleavage and polyadenylation. Is also required for efficient mRNA export to the cytoplasm. Acts in concert with a poly(A)-specific nuclease (PAN) to affect poly(A) tail shortening, which may occur concomitantly with either nucleocytoplasmic mRNA transport or translational initiation. In the cytoplasm, stimulates translation initiation and regulates mRNA decay through translation termination-coupled poly(A) shortening, probably mediated by PAN. In Neurospora crassa (strain ATCC 24698 / 74-OR23-1A / CBS 708.71 / DSM 1257 / FGSC 987), this protein is Polyadenylate-binding protein, cytoplasmic and nuclear (pabp-1).